We begin with the raw amino-acid sequence, 583 residues long: Aspartyl protease APCB1 (583 aa).

A helical transmembrane segment spans residues L83–P103. The Peptidase A1 domain occupies Y203 to M564. Catalysis depends on residues D223 and D431.

It belongs to the peptidase A1 family. In terms of assembly, interacts with BAG6 and BAGP1.

Its subcellular location is the membrane. In terms of biological role, involved in proteolytic processing of BAG6 and plant basal immunity. The protein is Aspartyl protease APCB1 of Arabidopsis thaliana (Mouse-ear cress).